Here is a 617-residue protein sequence, read N- to C-terminus: MKITSLHFLIFHKNLNYVSSKVKAKKIFYQRALNNIYLCTIRTMIVDIAEIKKRDNHALDTQESQELVNKIKEIKNSDEQNNSNNNNNNSSSSNFCSNNNSPFSHKETKLMVKEEVPNSIVKNILNNNSCATSIINNKFYTQINNIIPVKPEAMKEENINVSTVNTENDISKEKKENSHYFCDEIKVMKKEYSKDDFVTDVKLEMNDKEEEEEEKQKIGQESTHINIKVEKDTFNECNNSNVNEKKRNRSVDIHNELSNKRILTEDVVVKCNIKNDVKIIVTWNMNSITVRYKNKKKWDEFMNFFNNLNADVLCFQEVRLPAMNLSEPCDNKNKNKNKNDGIRDRGKIKNSDQKSLADYEIMEQILNDDFKDYNAYFSLANIKYSGQLVLVKKNIHIESIRYNLFFENNAHIHHDEGRVILVEFSNFFLLSTYTPNNGFDHVKFERRRLFDEQLQKFVTILRNEKQKPLVWTGDLNIAPEDIDLSHPAEFRRMKKGNVPKEFIGQPGCTDFERKNFQKILTAGNLVDSYRYLQNIKLNEDKKNNIKHTPNINDNIYTWRCPFLLGKSCNKAMRIDHFIVSKEFLNRINKIHIQGFSVFHNNFYGSDHCPVILYLKNE.

Residues 74–99 are disordered; the sequence is IKNSDEQNNSNNNNNNSSSSNFCSNN. Low complexity predominate over residues 81-99; the sequence is NNSNNNNNNSSSSNFCSNN. Mg(2+) is bound by residues Asn-284 and Glu-317. A disordered region spans residues 326–349; that stretch reads SEPCDNKNKNKNKNDGIRDRGKIK. Over residues 329–349 the composition is skewed to basic and acidic residues; sequence CDNKNKNKNKNDGIRDRGKIK. Asp-474, Asn-476, Asp-606, and His-607 together coordinate Mg(2+). His-607 acts as the Proton acceptor in catalysis.

The protein belongs to the DNA repair enzymes AP/ExoA family. Mg(2+) serves as cofactor. It depends on Mn(2+) as a cofactor. May be proteolytically cleaved into a 64 kDa form.

The protein resides in the mitochondrion. The enzyme catalyses Exonucleolytic cleavage in the 3'- to 5'-direction to yield nucleoside 5'-phosphates.. Its activity is regulated as follows. Apurinic/apyrimidinic (AP) endonuclease activity is maximal at low Mg(2+) (0.5-2 mM) with no activity seen at high concentrations (more than 10 mM). 3'-5' exonuclease activity is maximal in the range of 0.5-2 mM Mg(2+) with activity seen up to 10 mM Mg(2+). Functionally, multifunctional protein that plays a central role in mitochondrial DNA base excision repair (BER) pathway induced by oxidative stress. Has apurinic/apyrimidinic (AP) endonuclease activity towards double-stranded DNA (dsDNA). Has nucleotide incision repair (NIR) activity; acts on dsDNA with oxidized bases thymine glycol and 5,6-dihydro-2'-deoxyuridine. Has 3'-5' exonuclease; can use dsDNA templates with 3'-OH termini including blunt-end, gapped and mismatched 3'-recessed. Has 3'-phosphatase activity; cleaves 3'-phosphate from blunt, recessed and gapped dsDNA templates, followed by 3'-5' exonuclease activity. Has RNase H-like activity; cleaves RNA on 3'-recessed RNA-DNA duplex. Plays a role in merosome infection of host erythrocytes. This chain is DNA-(apurinic or apyrimidinic site) endonuclease, found in Plasmodium falciparum (isolate 3D7).